The following is a 32-amino-acid chain: Dermaseptin-L1 (32 aa).

In terms of tissue distribution, expressed by the skin glands.

It localises to the secreted. In terms of biological role, antimicrobial peptide active against the Gram-negative bacterium E.coli (MIC=8 uM) but inactive against the Gram-positive bacterium S.aureus. Also inhibits growth of zoospores of the chytrid fungus B.dendrobatidis at high concentrations (above 25 uM). Shows anticancer activities since it is cytolytic against HepG2 human hepatoma-derived cells (LC(50)=45 uM). Is only weakly hemolytic on human erythrocytes. The sequence is that of Dermaseptin-L1 from Agalychnis lemur (Lemur leaf frog).